The chain runs to 264 residues: MNKVTTKTLFEKKQKGEKITMLTAYDYTFAKLFDSCMVDILLVGDSLGMVILGYDSTIPVTMEDMEHHVKAVARGTKYSMVVADMPFLSYHTTPEEAVRNAGRLIRAGAYAVKIEGCDDVIDKIEAVIKAQIPVMGHLGLTPQSVNVFGGYDLRAKEEKEAKKLIEDAKKLEEVGVFAIVLEKVPAMVAKQVQESVKVPIIGIGAGPYCDGQVLVCYDMLGMYEDFKPKFVKRYAEVGSIIKDAVSKYIDEVKRGEFPGKEHSY.

Mg(2+) is bound by residues aspartate 45 and aspartate 84. 3-methyl-2-oxobutanoate contacts are provided by residues 45-46 (DS), aspartate 84, and lysine 113. Mg(2+) is bound at residue glutamate 115. Glutamate 182 acts as the Proton acceptor in catalysis.

This sequence belongs to the PanB family. In terms of assembly, homodecamer; pentamer of dimers. Mg(2+) is required as a cofactor.

It is found in the cytoplasm. The enzyme catalyses 3-methyl-2-oxobutanoate + (6R)-5,10-methylene-5,6,7,8-tetrahydrofolate + H2O = 2-dehydropantoate + (6S)-5,6,7,8-tetrahydrofolate. It participates in cofactor biosynthesis; (R)-pantothenate biosynthesis; (R)-pantoate from 3-methyl-2-oxobutanoate: step 1/2. Its function is as follows. Catalyzes the reversible reaction in which hydroxymethyl group from 5,10-methylenetetrahydrofolate is transferred onto alpha-ketoisovalerate to form ketopantoate. This Caldicellulosiruptor saccharolyticus (strain ATCC 43494 / DSM 8903 / Tp8T 6331) protein is 3-methyl-2-oxobutanoate hydroxymethyltransferase.